Here is a 485-residue protein sequence, read N- to C-terminus: Adenylate kinase 8 (485 aa).

2 adenylate kinase regions span residues 58–258 (PRVF…TFVL) and 269–471 (PRIL…SYIV). 67 to 72 (ASGKHT) contributes to the ATP binding site. The NMP 1 stretch occupies residues 87 to 113 (TPENVLSSDVSLLVKEAQSYRDKGQEV). AMP contacts are provided by residues 140 to 143 (GFPK) and Gln147. The tract at residues 177–206 (GKRIDITDGEVYHTTFDWPSDPAVQRNLVE) is LID 1. Arg218 lines the AMP pocket. Position 278 to 283 (278 to 283 (GSGRSL)) interacts with ATP. Positions 298 to 327 (CCGQVLKEAVADQTKLGELIQPYIENDQQV) are NMP 2. Residues 325–327 (QQV), 354–357 (GFPQ), and Gln361 contribute to the AMP site. Residues 391-424 (LCMTDPVSGERYHSIYKPAPRSEVQERLQQNPKY) form an LID 2 region. Arg432 is an AMP binding site.

Belongs to the adenylate kinase family.

It is found in the cytoplasm. It localises to the cytosol. The enzyme catalyses AMP + ATP = 2 ADP. It carries out the reaction a 2'-deoxyribonucleoside 5'-diphosphate + ATP = a 2'-deoxyribonucleoside 5'-triphosphate + ADP. The catalysed reaction is a ribonucleoside 5'-diphosphate + ATP = a ribonucleoside 5'-triphosphate + ADP. Its function is as follows. Nucleoside monophosphate (NMP) kinase that catalyzes the reversible transfer of the terminal phosphate group between nucleoside triphosphates and monophosphates. Has highest activity toward AMP, and weaker activity toward dAMP, CMP and dCMP. Also displays broad nucleoside diphosphate kinase activity. In Xenopus laevis (African clawed frog), this protein is Adenylate kinase 8 (ak8).